The sequence spans 545 residues: CTP synthase (545 aa).

An amidoligase domain region spans residues 1–264 (MQYIVVTGGV…ITRLSKLLNM (264 aa)). Ser-12 is a CTP binding site. Ser-12 lines the UTP pocket. 13–18 (GLGKGT) contributes to the ATP binding site. Position 53 (Tyr-53) interacts with L-glutamine. ATP is bound at residue Asp-70. Residues Asp-70 and Glu-140 each coordinate Mg(2+). Residues 147–149 (DIE), 185–190 (KTKPTQ), and Arg-221 each bind CTP. UTP contacts are provided by residues 185 to 190 (KTKPTQ) and Arg-221. The Glutamine amidotransferase type-1 domain maps to 294-527 (YVDLHDAYIS…VEQALIFKHR (234 aa)). Residue Gly-347 coordinates L-glutamine. Cys-374 (nucleophile; for glutamine hydrolysis) is an active-site residue. L-glutamine contacts are provided by residues 375–378 (LGFQ), Glu-398, and Arg-455. Residues His-500 and Glu-502 contribute to the active site.

Belongs to the CTP synthase family. Homotetramer.

It catalyses the reaction UTP + L-glutamine + ATP + H2O = CTP + L-glutamate + ADP + phosphate + 2 H(+). The enzyme catalyses L-glutamine + H2O = L-glutamate + NH4(+). It carries out the reaction UTP + NH4(+) + ATP = CTP + ADP + phosphate + 2 H(+). It participates in pyrimidine metabolism; CTP biosynthesis via de novo pathway; CTP from UDP: step 2/2. With respect to regulation, allosterically activated by GTP, when glutamine is the substrate; GTP has no effect on the reaction when ammonia is the substrate. The allosteric effector GTP functions by stabilizing the protein conformation that binds the tetrahedral intermediate(s) formed during glutamine hydrolysis. Inhibited by the product CTP, via allosteric rather than competitive inhibition. Functionally, catalyzes the ATP-dependent amination of UTP to CTP with either L-glutamine or ammonia as the source of nitrogen. Regulates intracellular CTP levels through interactions with the four ribonucleotide triphosphates. The sequence is that of CTP synthase from Thermoplasma acidophilum (strain ATCC 25905 / DSM 1728 / JCM 9062 / NBRC 15155 / AMRC-C165).